An 867-amino-acid polypeptide reads, in one-letter code: Translation initiation factor IF-2 (867 aa).

The region spanning 367-534 (TRAPVVTIMG…AILLQSEILE (168 aa)) is the tr-type G domain. Residues 376–383 (GHVDHGKT) are G1. 376–383 (GHVDHGKT) is a binding site for GTP. A G2 region spans residues 401 to 405 (GITQN). Positions 422–425 (DTPG) are G3. GTP contacts are provided by residues 422 to 426 (DTPGH) and 476 to 479 (NKID). The segment at 476-479 (NKID) is G4. A G5 region spans residues 512–514 (SAK).

The protein belongs to the TRAFAC class translation factor GTPase superfamily. Classic translation factor GTPase family. IF-2 subfamily.

It is found in the cytoplasm. In terms of biological role, one of the essential components for the initiation of protein synthesis. Protects formylmethionyl-tRNA from spontaneous hydrolysis and promotes its binding to the 30S ribosomal subunits. Also involved in the hydrolysis of GTP during the formation of the 70S ribosomal complex. This chain is Translation initiation factor IF-2, found in Buchnera aphidicola subsp. Schizaphis graminum (strain Sg).